We begin with the raw amino-acid sequence, 501 residues long: Cytochrome P450 90A3 (501 aa).

The helical transmembrane segment at 2–22 (AAAALLLLAAAAAIVVVAMVL) threads the bilayer. Residue C446 coordinates heme.

Belongs to the cytochrome P450 family. The cofactor is heme. In terms of tissue distribution, highly expressed in shoot apex and inflorenscence. Expressed in roots, stems, leaf blades and leaf sheaths.

Its subcellular location is the membrane. The protein operates within plant hormone biosynthesis; brassinosteroid biosynthesis. Functionally, catalyzes the C23-alpha-hydroxylation step in brassinosteroid biosynthesis. Converts 6-deoxocathasterone (6-deoxoCT) to 6-deoxoteasterone (6-deoxoTE) in the late C6-oxidation pathway and cathasterone (CT) to teasterone (TE) in the early C6-oxidation pathway of brassinolide (BL) biosynthesis. The chain is Cytochrome P450 90A3 from Oryza sativa subsp. japonica (Rice).